Consider the following 124-residue polypeptide: S-adenosylmethionine decarboxylase proenzyme (124 aa).

Ser-63 functions as the Schiff-base intermediate with substrate; via pyruvic acid in the catalytic mechanism. Ser-63 carries the post-translational modification Pyruvic acid (Ser); by autocatalysis. Catalysis depends on His-68, which acts as the Proton acceptor; for processing activity. Cys-83 serves as the catalytic Proton donor; for catalytic activity.

The protein belongs to the prokaryotic AdoMetDC family. Type 1 subfamily. In terms of assembly, heterotetramer of two alpha and two beta chains arranged as a dimer of alpha/beta heterodimers. It depends on pyruvate as a cofactor. In terms of processing, is synthesized initially as an inactive proenzyme. Formation of the active enzyme involves a self-maturation process in which the active site pyruvoyl group is generated from an internal serine residue via an autocatalytic post-translational modification. Two non-identical subunits are generated from the proenzyme in this reaction, and the pyruvate is formed at the N-terminus of the alpha chain, which is derived from the carboxyl end of the proenzyme. The post-translation cleavage follows an unusual pathway, termed non-hydrolytic serinolysis, in which the side chain hydroxyl group of the serine supplies its oxygen atom to form the C-terminus of the beta chain, while the remainder of the serine residue undergoes an oxidative deamination to produce ammonia and the pyruvoyl group blocking the N-terminus of the alpha chain.

The enzyme catalyses S-adenosyl-L-methionine + H(+) = S-adenosyl 3-(methylsulfanyl)propylamine + CO2. The protein operates within amine and polyamine biosynthesis; S-adenosylmethioninamine biosynthesis; S-adenosylmethioninamine from S-adenosyl-L-methionine: step 1/1. Functionally, catalyzes the decarboxylation of S-adenosylmethionine to S-adenosylmethioninamine (dcAdoMet), the propylamine donor required for the synthesis of the polyamines spermine and spermidine from the diamine putrescine. The protein is S-adenosylmethionine decarboxylase proenzyme of Caldicellulosiruptor bescii (strain ATCC BAA-1888 / DSM 6725 / KCTC 15123 / Z-1320) (Anaerocellum thermophilum).